Reading from the N-terminus, the 257-residue chain is MSDLKAAALRALKLMDLTTLNDDDTDEKVIALCKNAKTAVGNTAAVCIYPRFIPAAKKQLREQGTPEVRIATVTNFPHGNDDIEIAVAETKAAVAYGADEVDVVFPYRALIAGNADVGFELVKQCKAACGDILLKVIIETGELKTEALIKQASELSIKAGADFIKTSTGKVPVNATPEAAEIMLTVIKDMDVAKTVGFKPAGGVRTAEDAQAFLAMADRILGGDWADNMHYRFGASSLLANLLHTLGEGEEAAQGGY.

D102 serves as the catalytic Proton donor/acceptor. The Schiff-base intermediate with acetaldehyde role is filled by K165. K199 serves as the catalytic Proton donor/acceptor.

This sequence belongs to the DeoC/FbaB aldolase family. DeoC type 2 subfamily.

It localises to the cytoplasm. The enzyme catalyses 2-deoxy-D-ribose 5-phosphate = D-glyceraldehyde 3-phosphate + acetaldehyde. It participates in carbohydrate degradation; 2-deoxy-D-ribose 1-phosphate degradation; D-glyceraldehyde 3-phosphate and acetaldehyde from 2-deoxy-alpha-D-ribose 1-phosphate: step 2/2. Catalyzes a reversible aldol reaction between acetaldehyde and D-glyceraldehyde 3-phosphate to generate 2-deoxy-D-ribose 5-phosphate. This is Deoxyribose-phosphate aldolase from Photobacterium profundum (strain SS9).